We begin with the raw amino-acid sequence, 237 residues long: Oligoribonuclease, mitochondrial (237 aa).

Residues M1–G25 constitute a mitochondrion transit peptide. Residues M43 to L207 form the Exonuclease domain. Positions 47 and 49 each coordinate Mg(2+). S92 is subject to Phosphoserine. Position 122 is a phosphotyrosine (Y122). Mg(2+) is bound at residue D147. K173 carries the N6-acetyllysine modification. Residue H194 is part of the active site. Residue D199 coordinates Mg(2+).

The protein belongs to the oligoribonuclease family. Homodimer. Homotetramer. Mn(2+) serves as cofactor. Mg(2+) is required as a cofactor. Highly expressed in the heart and at lower levels in the lymph nodes, brain, lung, liver, spleen and thymus.

Its subcellular location is the mitochondrion intermembrane space. It localises to the mitochondrion matrix. It is found in the mitochondrion. The protein localises to the cytoplasm. The protein resides in the nucleus. With respect to regulation, inhibited by adenosine 3',5'-bisphosphate. Functionally, 3'-to-5'exoribonuclease that preferentially degrades DNA and RNA oligonucleotides composed of only two nucleotides. Binds and degrades longer oligonucleotides with a lower affinity. Plays dual roles in mitochondria, scavenging nanoRNAs (small RNA oligonucleotides of &lt;5 nucleotides) that are produced by the degradosome and clearing short RNAs that are generated by RNA processing. Essential for correct initiation of mitochondrial transcription, degrading mitochondrial RNA dinucleotides to prevent RNA-primed transcription at non-canonical sites in the mitochondrial genome. Essential for embryonic development. In terms of biological role, 3'-to-5'exoribonuclease that preferentially degrades DNA and RNA oligonucleotides composed of only two nucleotides. The protein is Oligoribonuclease, mitochondrial (REXO2) of Homo sapiens (Human).